Reading from the N-terminus, the 158-residue chain is Placenta growth factor (158 aa).

Positions 1 to 23 (MLAMKLFTCFLQVLAGLAVHSQG) form a signal peptide, or 26. N29 and N30 each carry an N-linked (GlcNAc...) asparagine glycan. Disulfide bonds link C48-C90, C79-C125, and C83-C127. A glycan (N-linked (GlcNAc...) asparagine) is linked at N97. Residues 136-158 (AERRKTKGKRKQSKTPQTEEPHL) are disordered. The segment covering 137-148 (ERRKTKGKRKQS) has biased composition (basic residues).

It belongs to the PDGF/VEGF growth factor family. As to quaternary structure, antiparallel homodimer; disulfide-linked. Also found as heterodimer with VEGFA/VEGF.

The protein localises to the secreted. Growth factor active in angiogenesis and endothelial cell growth, stimulating their proliferation and migration. It binds to the receptor FLT1/VEGFR-1. Also promotes cell tumor growth. In Rattus norvegicus (Rat), this protein is Placenta growth factor (Pgf).